Consider the following 253-residue polypeptide: Methionine aminopeptidase A (253 aa).

Histidine 80 provides a ligand contact to substrate. Positions 98, 109, and 172 each coordinate a divalent metal cation. Histidine 179 is a binding site for substrate. 2 residues coordinate a divalent metal cation: glutamate 205 and glutamate 236.

It belongs to the peptidase M24A family. Methionine aminopeptidase type 1 subfamily. Monomer. Co(2+) is required as a cofactor. Requires Zn(2+) as cofactor. It depends on Mn(2+) as a cofactor. Fe(2+) serves as cofactor.

It carries out the reaction Release of N-terminal amino acids, preferentially methionine, from peptides and arylamides.. In terms of biological role, removes the N-terminal methionine from nascent proteins. The N-terminal methionine is often cleaved when the second residue in the primary sequence is small and uncharged (Met-Ala-, Cys, Gly, Pro, Ser, Thr, or Val). Requires deformylation of the N(alpha)-formylated initiator methionine before it can be hydrolyzed. This chain is Methionine aminopeptidase A, found in Synechocystis sp. (strain ATCC 27184 / PCC 6803 / Kazusa).